The primary structure comprises 92 residues: Signal recognition particle 19 kDa protein (92 aa).

It belongs to the SRP19 family. In terms of assembly, part of the signal recognition particle protein translocation system, which is composed of SRP and FtsY. Archaeal SRP consists of a 7S RNA molecule of 300 nucleotides and two protein subunits: SRP54 and SRP19.

It is found in the cytoplasm. Its function is as follows. Involved in targeting and insertion of nascent membrane proteins into the cytoplasmic membrane. Binds directly to 7S RNA and mediates binding of the 54 kDa subunit of the SRP. In Halorubrum lacusprofundi (strain ATCC 49239 / DSM 5036 / JCM 8891 / ACAM 34), this protein is Signal recognition particle 19 kDa protein.